A 744-amino-acid chain; its full sequence is Biotin sulfoxide reductase (744 aa).

Mo-bis(molybdopterin guanine dinucleotide) is bound at residue serine 121.

It belongs to the prokaryotic molybdopterin-containing oxidoreductase family. The cofactor is Mo-bis(molybdopterin guanine dinucleotide).

In terms of biological role, this enzyme may serve as a scavenger, allowing the cell to utilize biotin sulfoxide as a biotin source. It reduces a spontaneous oxidation product of biotin, D-biotin D-sulfoxide (BSO or BDS), back to biotin. This is Biotin sulfoxide reductase from Cereibacter sphaeroides (Rhodobacter sphaeroides).